Consider the following 119-residue polypeptide: Ribonuclease P protein component (119 aa).

This sequence belongs to the RnpA family. Consists of a catalytic RNA component (M1 or rnpB) and a protein subunit.

The enzyme catalyses Endonucleolytic cleavage of RNA, removing 5'-extranucleotides from tRNA precursor.. Its function is as follows. RNaseP catalyzes the removal of the 5'-leader sequence from pre-tRNA to produce the mature 5'-terminus. It can also cleave other RNA substrates such as 4.5S RNA. The protein component plays an auxiliary but essential role in vivo by binding to the 5'-leader sequence and broadening the substrate specificity of the ribozyme. The polypeptide is Ribonuclease P protein component (Beutenbergia cavernae (strain ATCC BAA-8 / DSM 12333 / CCUG 43141 / JCM 11478 / NBRC 16432 / NCIMB 13614 / HKI 0122)).